Here is a 105-residue protein sequence, read N- to C-terminus: Guanidinium exporter (105 aa).

The helical transmembrane segment at 1 to 21 threads the bilayer; the sequence is MSWIILLIAGLLEVVWAVGLK. Residues 22–28 lie on the Cytoplasmic side of the membrane; it reads YTHGFSR. A helical transmembrane segment spans residues 29-49; that stretch reads LTPSIITITAMVISMALLSWA. Topologically, residues 50-57 are periplasmic; that stretch reads MKTLPVGT. A helical transmembrane segment spans residues 58-78; sequence AYAIWTGIGAVGAAITGILLL. Over 79-81 the chain is Cytoplasmic; it reads GES. The helical transmembrane segment at 82 to 102 threads the bilayer; it reads ASPARLLSLGLIVAGIIGLKL. Residues 103 to 105 lie on the Periplasmic side of the membrane; that stretch reads SAH.

It belongs to the drug/metabolite transporter (DMT) superfamily. Small multidrug resistance (SMR) (TC 2.A.7.1) family. Gdx/SugE subfamily.

The protein resides in the cell inner membrane. Its function is as follows. Guanidinium ion exporter. Couples guanidinium export to the proton motive force, exchanging one guanidinium ion for two protons. This chain is Guanidinium exporter, found in Salmonella typhi.